The sequence spans 369 residues: Protein RIC-3 (369 aa).

The N-terminal stretch at 1–28 (MAYSTVQRVALASGLVLALSLLLPKAFL) is a signal peptide. The Lumenal segment spans residues 29–95 (SRGKRQEPPP…AGGGGSGRGL (67 aa)). The interval 30-67 (RGKRQEPPPTPEGKLGRFPPMMHHHQAPSDGQTPGARF) is disordered. Residues 96 to 116 (MGQIIPIYGFGIFLYILYILF) form a helical membrane-spanning segment. Residues 117 to 369 (KLSKGKTTAE…LRKRNPQGLE (253 aa)) lie on the Cytoplasmic side of the membrane. Residues 140 to 169 (RKITSFELAQLQEKLKETEAAMEKLINRVG) are a coiled coil. K202 carries the post-translational modification N6-acetyllysine; alternate. K202 is covalently cross-linked (Glycyl lysine isopeptide (Lys-Gly) (interchain with G-Cter in ubiquitin); alternate). Disordered regions lie at residues 272-295 (ESDHLGWESLPTDPRAQEDNSVTS) and 316-369 (LAEN…QGLE). Residues 332–346 (ETTKEEWSQDFKDEG) are compositionally biased toward basic and acidic residues. The segment covering 360–369 (LRKRNPQGLE) has biased composition (basic residues).

This sequence belongs to the ric-3 family. Monomer and homodimer. Interacts with CHRNA7, CHRNA3, CHRNA4, CHRNB2, CHRNB4 and HTR3A. As to expression, broadly expressed, with high levels in muscle, brain, heart, pancreas and testis. In the central nervous system, highest levels are detected in the cerebellum and pituitary gland. Over-expressed in brains from patients with bipolar disease or schizophrenia. Isoform 5 is predominantly expressed in the brain.

It localises to the endoplasmic reticulum membrane. The protein resides in the golgi apparatus membrane. Molecular chaperone which facilitates proper subunit assembly and surface trafficking of alpha-7 (CHRNA7) and alpha-8 (CHRNA8) nicotinic acetylcholine receptors. May also promote functional expression of homomeric serotoninergic 5-HT3 receptors, and of heteromeric acetylcholine receptors alpha-3/beta-2, alpha-3/beta-4, alpha-4/beta-2 and alpha-4/beta-4. The polypeptide is Protein RIC-3 (RIC3) (Homo sapiens (Human)).